We begin with the raw amino-acid sequence, 184 residues long: UPF0301 protein Sden_2674 (184 aa).

The protein belongs to the UPF0301 (AlgH) family.

This Shewanella denitrificans (strain OS217 / ATCC BAA-1090 / DSM 15013) protein is UPF0301 protein Sden_2674.